The chain runs to 343 residues: Arginine N-succinyltransferase (343 aa).

Leu125 contributes to the succinyl-CoA binding site. His229 (proton donor) is an active-site residue.

It belongs to the arginine N-succinyltransferase family.

The catalysed reaction is succinyl-CoA + L-arginine = N(2)-succinyl-L-arginine + CoA + H(+). It functions in the pathway amino-acid degradation; L-arginine degradation via AST pathway; L-glutamate and succinate from L-arginine: step 1/5. Functionally, catalyzes the transfer of succinyl-CoA to arginine to produce N(2)-succinylarginine. The protein is Arginine N-succinyltransferase of Photorhabdus laumondii subsp. laumondii (strain DSM 15139 / CIP 105565 / TT01) (Photorhabdus luminescens subsp. laumondii).